The chain runs to 260 residues: Neurotrophin-3 (260 aa).

Residues 1–18 (MSILFYVMFLPYLCGIHA) form the signal peptide. Residues 19–141 (TNMDKRNLPE…VNNRTSRRKR (123 aa)) constitute a propeptide that is removed on maturation. A glycan (N-linked (GlcNAc...) asparagine) is linked at asparagine 134. 3 disulfide bridges follow: cysteine 155–cysteine 220, cysteine 198–cysteine 249, and cysteine 208–cysteine 251.

Belongs to the NGF-beta family.

Its subcellular location is the secreted. In terms of biological role, seems to promote the survival of visceral and proprioceptive sensory neurons. This chain is Neurotrophin-3 (ntf3), found in Xenopus laevis (African clawed frog).